The following is a 544-amino-acid chain: Shootin-1 (544 aa).

Coiled-coil stretches lie at residues 17–100 (SNQV…LKRK), 141–184 (IVIT…EKHD), and 259–349 (EALQ…QVSN). The tract at residues 343–544 (KLQQVSNPPT…TTTICTEQLS (202 aa)) is disordered. A compositionally biased stretch (pro residues) spans 352 to 371 (TAAPAPPPPPPPPPPPPPPS). A compositionally biased stretch (low complexity) spans 372–383 (SSSSNPLSSLLS). Positions 397 to 412 (LVEKDSSEKSPEKDVR) are enriched in basic and acidic residues. Residues 469 to 479 (SSSPGPRPPSP) show a composition bias toward pro residues. Positions 480-504 (SEKSELEKALQRRREAVKSAKNNTN) form a coiled coil. A compositionally biased stretch (basic and acidic residues) spans 481-497 (EKSELEKALQRRREAVK). Polar residues predominate over residues 499–544 (AKNNTNPSSVVDLTQIKQTRSEPGQNTGDQETLRHTTTTICTEQLS).

Belongs to the shootin family.

Its subcellular location is the perikaryon. The protein localises to the cell projection. It localises to the axon. The protein resides in the growth cone. It is found in the cytoplasm. Its subcellular location is the cytoskeleton. The protein localises to the filopodium. It localises to the lamellipodium. In terms of biological role, involved in the generation of internal asymmetric signals required for neuronal polarization and neurite outgrowth. In Danio rerio (Zebrafish), this protein is Shootin-1.